The following is a 253-amino-acid chain: MKYIEVDEELYRFIASKTERIGESASDILRRLLTLPVDTVTPFEPNAIDEPSLDVAHHQASNFAASNQEQQTGHGHAGEPSAVQTPESNDYAKAQPHSSGYQPGQLEGHKSEPQTLAQLNSQPLAVGQSSQSATSQVDFNALVNEHLLSQQKGAVGRFMWLLEGLAALAPSQFNKVLLVQGKGRLYFARSKDELLASSASANPKEIGTTGYWVTTNNNTAKKQAILVEVLTKLHCDETLASAIADRICDKVAG.

The segment at 66–112 (SNQEQQTGHGHAGEPSAVQTPESNDYAKAQPHSSGYQPGQLEGHKSE) is disordered. The interaction with DNA stretch occupies residues 154–155 (AV).

Belongs to the SeqA family. Homodimer. Polymerizes to form helical filaments.

The protein localises to the cytoplasm. Its function is as follows. Negative regulator of replication initiation, which contributes to regulation of DNA replication and ensures that replication initiation occurs exactly once per chromosome per cell cycle. Binds to pairs of hemimethylated GATC sequences in the oriC region, thus preventing assembly of replication proteins and re-initiation at newly replicated origins. Repression is relieved when the region becomes fully methylated. In Shewanella denitrificans (strain OS217 / ATCC BAA-1090 / DSM 15013), this protein is Negative modulator of initiation of replication.